The following is a 158-amino-acid chain: Endoribonuclease YbeY (158 aa).

Residues His119, His123, and Asp129 each coordinate Zn(2+).

This sequence belongs to the endoribonuclease YbeY family. Requires Zn(2+) as cofactor.

It localises to the cytoplasm. In terms of biological role, single strand-specific metallo-endoribonuclease involved in late-stage 70S ribosome quality control and in maturation of the 3' terminus of the 16S rRNA. The polypeptide is Endoribonuclease YbeY (Chlamydia abortus (strain DSM 27085 / S26/3) (Chlamydophila abortus)).